The following is a 243-amino-acid chain: 6-carboxyhexanoate--CoA ligase (243 aa).

Belongs to the BioW family. As to quaternary structure, homodimer. Requires Mg(2+) as cofactor.

It catalyses the reaction heptanedioate + ATP + CoA = 6-carboxyhexanoyl-CoA + AMP + diphosphate. Its pathway is metabolic intermediate metabolism; pimeloyl-CoA biosynthesis; pimeloyl-CoA from pimelate: step 1/1. In terms of biological role, catalyzes the transformation of pimelate into pimeloyl-CoA with concomitant hydrolysis of ATP to AMP. This chain is 6-carboxyhexanoate--CoA ligase, found in Thermocrinis albus (strain DSM 14484 / JCM 11386 / HI 11/12).